The primary structure comprises 1378 residues: DNA-directed RNA polymerase subunit beta (1378 aa).

It belongs to the RNA polymerase beta chain family. In terms of assembly, the RNAP catalytic core consists of 2 alpha, 1 beta, 1 beta' and 1 omega subunit. When a sigma factor is associated with the core the holoenzyme is formed, which can initiate transcription.

It carries out the reaction RNA(n) + a ribonucleoside 5'-triphosphate = RNA(n+1) + diphosphate. In terms of biological role, DNA-dependent RNA polymerase catalyzes the transcription of DNA into RNA using the four ribonucleoside triphosphates as substrates. In Agrobacterium fabrum (strain C58 / ATCC 33970) (Agrobacterium tumefaciens (strain C58)), this protein is DNA-directed RNA polymerase subunit beta.